Reading from the N-terminus, the 211-residue chain is Methylthioribulose-1-phosphate dehydratase (211 aa).

Zn(2+) contacts are provided by H94 and H96.

The protein belongs to the aldolase class II family. MtnB subfamily. Zn(2+) serves as cofactor.

It catalyses the reaction 5-(methylsulfanyl)-D-ribulose 1-phosphate = 5-methylsulfanyl-2,3-dioxopentyl phosphate + H2O. The protein operates within amino-acid biosynthesis; L-methionine biosynthesis via salvage pathway; L-methionine from S-methyl-5-thio-alpha-D-ribose 1-phosphate: step 2/6. Its function is as follows. Catalyzes the dehydration of methylthioribulose-1-phosphate (MTRu-1-P) into 2,3-diketo-5-methylthiopentyl-1-phosphate (DK-MTP-1-P). The sequence is that of Methylthioribulose-1-phosphate dehydratase from Pseudoalteromonas translucida (strain TAC 125).